The chain runs to 372 residues: GTPase Obg (372 aa).

An Obg domain is found at 1–159 (MKFIDEARIE…RMLKLELKVL (159 aa)). A disordered region spans residues 128–147 (LHFKSSTNRAPRQKTDGKPG). Residues 160–334 (ADVGLLGMPN…LVYAIHDYLV (175 aa)) enclose the OBG-type G domain. Residues 166-173 (GMPNAGKS), 191-195 (FTTLA), 213-216 (DIPG), 284-287 (NKLD), and 315-317 (SAL) contribute to the GTP site. Positions 173 and 193 each coordinate Mg(2+).

It belongs to the TRAFAC class OBG-HflX-like GTPase superfamily. OBG GTPase family. In terms of assembly, monomer. Mg(2+) serves as cofactor.

The protein resides in the cytoplasm. An essential GTPase which binds GTP, GDP and possibly (p)ppGpp with moderate affinity, with high nucleotide exchange rates and a fairly low GTP hydrolysis rate. Plays a role in control of the cell cycle, stress response, ribosome biogenesis and in those bacteria that undergo differentiation, in morphogenesis control. The protein is GTPase Obg of Burkholderia mallei (strain NCTC 10247).